Here is a 474-residue protein sequence, read N- to C-terminus: UDP-glycosyltransferase 71E1 (474 aa).

UDP-alpha-D-glucose-binding positions include serine 275, 341–342 (WA), 359–367 (HCGWNSTLE), and 381–384 (YAEQ).

Belongs to the UDP-glycosyltransferase family.

Functionally, may glycosylate diterpenes or flavonols in leaves. The sequence is that of UDP-glycosyltransferase 71E1 from Stevia rebaudiana (Stevia).